The chain runs to 265 residues: Early E4 31 kDa protein (265 aa).

This sequence belongs to the adenoviridae E4 30 to 34 kDa protein family. In terms of assembly, interacts with E1B-55k.

The protein localises to the host nucleus. The protein resides in the host cytoplasm. Plays a major role to prevent cellular inhibition of viral genome replication by nuclear bodies. Assembles an SCF-like E3 ubiquitin ligase complex based on the cellular proteins ELOB, ELOC, CUL5 and RBX1, in cooperation with viral E1B-55K. This viral RING-type ligase ubiquitinates cellular substrates prior to proteasomal degradation: p53/TP53, LIG4, MRE11-RAD50-NBS1 (MRN) complex, ITGA3, DAXX and BLM. The protein is Early E4 31 kDa protein of Canine adenovirus serotype 1 (strain RI261) (CAdV-1).